A 1145-amino-acid chain; its full sequence is Cation channel sperm-associated auxiliary subunit gamma 2 (1145 aa).

A signal peptide spans 1–38 (MVSRPAMSPVSPVWPRKPNLWAFWVLRLVLLLSLKSWA). Residues 39 to 1061 (EDALQHCTWL…IHGLPLSSKR (1023 aa)) lie on the Extracellular side of the membrane. Disulfide bonds link Cys45/Cys106 and Cys160/Cys166. N-linked (GlcNAc...) asparagine glycosylation is present at Asn103. A glycan (N-linked (GlcNAc...) asparagine) is linked at Asn178. A disulfide bond links Cys289 and Cys344. N-linked (GlcNAc...) asparagine glycans are attached at residues Asn356, Asn402, Asn672, and Asn743. 6 disulfide bridges follow: Cys395-Cys403, Cys634-Cys856, Cys802-Cys830, Cys878-Cys1042, Cys905-Cys914, and Cys1006-Cys1012. N-linked (GlcNAc...) asparagine glycosylation occurs at Asn1038. A helical transmembrane segment spans residues 1062-1083 (TSFIVMVSTSFFIALVVFYILF). Residues 1084 to 1145 (CLVWPHIVKA…KEDNVQAKTA (62 aa)) lie on the Cytoplasmic side of the membrane.

It belongs to the CATSPERG family. Component of the CatSper complex or CatSpermasome composed of the core pore-forming members CATSPER1, CATSPER2, CATSPER3 and CATSPER4 as well as auxiliary members CATSPERB, CATSPERG2, CATSPERD, CATSPERE, CATSPERZ, C2CD6/CATSPERT, SLCO6C1, TMEM249, TMEM262 and EFCAB9. HSPA1 may be an additional auxiliary complex member. The core complex members CATSPER1, CATSPER2, CATSPER3 and CATSPER4 form a heterotetrameric channel. The auxiliary CATSPERB, CATSPERG2, CATSPERD and CATSPERE subunits form a pavilion-like structure over the pore which stabilizes the complex through interactions with CATSPER4, CATSPER3, CATSPER1 and CATSPER2 respectively. SLCO6C1 interacts with CATSPERE and TMEM262/CATSPERH interacts with CATSPERB, further stabilizing the complex. C2CD6/CATSPERT interacts at least with CATSPERD and is required for targeting the CatSper complex in the flagellar membrane. In terms of tissue distribution, testis-specific. Specifically expressed in the principal piece of the sperm tail (at protein level). Expressed in spermatocytes and spermatids within the seminiferous tubule but not in interstitial cells.

It localises to the cell projection. The protein localises to the cilium. Its subcellular location is the flagellum membrane. Functionally, auxiliary component of the CatSper complex, a complex involved in sperm cell hyperactivation. Sperm cell hyperactivation is needed for sperm motility which is essential late in the preparation of sperm for fertilization. The sequence is that of Cation channel sperm-associated auxiliary subunit gamma 2 from Mus musculus (Mouse).